Here is a 366-residue protein sequence, read N- to C-terminus: DNA double-strand break repair protein Mre11 (366 aa).

4 residues coordinate Mn(2+): aspartate 8, histidine 10, aspartate 49, and asparagine 84. Histidine 85 acts as the Proton donor in catalysis. The Mn(2+) site is built by histidine 158, histidine 186, and histidine 188.

Belongs to the MRE11/RAD32 family. In terms of assembly, homodimer. Forms a heterotetramer composed of two Mre11 subunits and two Rad50 subunits. Mn(2+) serves as cofactor.

Nuclease activity is regulated by Rad50. Functionally, part of the Rad50/Mre11 complex, which is involved in the early steps of DNA double-strand break (DSB) repair. The complex may facilitate opening of the processed DNA ends to aid in the recruitment of HerA and NurA. Mre11 binds to DSB ends and has both double-stranded 3'-5' exonuclease activity and single-stranded endonuclease activity. The sequence is that of DNA double-strand break repair protein Mre11 from Methanocaldococcus jannaschii (strain ATCC 43067 / DSM 2661 / JAL-1 / JCM 10045 / NBRC 100440) (Methanococcus jannaschii).